Consider the following 33-residue polypeptide: Beta-theraphotoxin-Cm1b (33 aa).

3 disulfide bridges follow: Cys2–Cys17, Cys9–Cys22, and Cys16–Cys29. At Leu33 the chain carries Leucine amide.

The protein belongs to the neurotoxin 10 (Hwtx-1) family. 04 (CcoTx1) subfamily. As to expression, expressed by the venom gland.

The protein localises to the secreted. Its function is as follows. Inhibits several voltage-gated sodium channels and only one voltage-gated calcium channel (Cav2.2/CACNA1B (IC(50)=1.1 uM) and Nav1.2/SCN2A (IC(50)=3.7-80 nM), Nav1.3/SCN3A (IC(50)=88-5570 nM), Nav1.1/SCN1A (IC(50)=170-407 nM), Nav1.7/SCN9A (IC(50)=95.5-230 nM), Nav1.6/SCN6A (IC(50)=49.9-3990 nM), Nav1.4/SCN4A (IC(50)=113-400 nM or &gt;10 uM), Nav1.5/SCN5A (IC(50)=1524-1634 nM or &gt;10 uM)). The toxin acts by shifting the voltage dependence of channel activation to more depolarized potentials and by blocking the inward component of the sodium current. It shows moderate affinity for lipid bilayers without cholesterol and high affinity for lipid bilayers containing cholesterol. In vivo, this toxin causes general ataxia, lack of response to stimuli, and semiparalysis. After a few minutes, the mice are unable to stand, and breathing is reduced in rhythm and intensity. Symptoms gradually increase with progressive slowing of breathing and flaccid paralysis; death occurred within 10 to 20 minutes post injection. Animals remain totally flaccid, and no symptoms of excitatory neurotoxicity are observed. This chain is Beta-theraphotoxin-Cm1b, found in Ceratogyrus marshalli (Straighthorned baboon tarantula).